A 167-amino-acid chain; its full sequence is U-scoloptoxin(08)-Er5a (167 aa).

An N-terminal signal peptide occupies residues 1–22 (MKTNCEFPLLCLLIVLVANVEG). Residues 23–94 (EVEDTGLKMV…KRLWRNWERR (72 aa)) constitute a propeptide that is removed on maturation. RLWRNWE repeat units lie at residues 34–40 (RLWRNWE), 61–67 (RLWRNWE), and 86–92 (RLWRNWE). Gln-95 bears the Pyrrolidone carboxylic acid mark. The stretch at 107 to 113 (ELWRNWE) is one RLWRNWE 4; approximate repeat. The propeptide occupies 112–118 (WEDLKRR). Gln-119 is modified (pyrrolidone carboxylic acid). The stretch at 134 to 140 (RLWRNWE) is one RLWRNWE 5 repeat. The propeptide occupies 139–167 (WEDNHATLRKRSADSLSRQKRLGKERGKE). The interval 147-167 (RKRSADSLSRQKRLGKERGKE) is disordered.

This sequence belongs to the scoloptoxin-08 family. Expressed by the venom gland.

It localises to the secreted. The polypeptide is U-scoloptoxin(08)-Er5a (Ethmostigmus rubripes (Giant centipede)).